The primary structure comprises 1021 residues: MEGGRSWSIESYLNEYFDIPAKNPPGEARRRWRRAVGLIVRNRRRRFGRFSDVDAIDEAQRRKILVRVKQYHLPPELIEEGFCISPDELAAIANMREDYTMLRMHGGINGISRKIKASLEDGAKETDIATRQMLYGANRHAEKPPRSFWMFVWDALHDLTLIILVVCALVSIVVGLATKGWPMGIYDGFGIILSILLVVLVTATSDYQQARKFMELDREKQKIYIRVTRDKKTKEVLVHDLVVGDILHLSIGDVVPADGLFISGDCLMIDESSLSGESEPVNISEERPFLHAGNKVVDGAAKMLVTAVGTRTEWGKIMGTLNGDGVDETPLQVKLNGVATIIGQIGLVFAVLTFLVLLARFLADKGMHVGLLNWSANDALTIVNYFAIAVTIIVVAVPEGLPLAVTLSLAFAMKKLMHDKALVRHLAACETMGSASCICTDKTGTLTTNHMIVDKVWIGDVKFVGDKKNSELKSTISERVMAILIQGIFVNTASEVVKGDDGKNTILGLATETALLEFGLSLEEHLYDDYNKLTRIKVDPFNSVKKKMSVTIQLPNGGIRTFCKGASEIILEQCNTIHNTDGNIVPLSEMQKHNVLNIINSFASEALRTLCIAFKDMDEFPNDQPISDDGYTLIAVFGIKDPVRPGVKDAVRTCMAAGIRVRMVTGDNINTAKAIAKECGILTEDGIAIEGQQLNNKSSDELKELLPKIQVIARSLPMDKYKLVTSLKSMYQEVVAVTGDGTNDAPALHESDIGLAMGITGTEVAKESADVIIMDDNFETIVNVARWGRAVYLNIQKFVQFQLTVNIVALIVNFVSACIIGSAPLTAVQLLWVNMIMDTLGALALATEPPNDEMMKRPPVRRGDNFITRIMWRNILGQGLYQLLVLATLMVIGKKLLSIEGPQSDKTINTLIFNSFVFCQVFNEINCREMEKINVLQGIFRNWIFVGILTATVIFQVIIVEFLGTFANTVPLSGELWLLSVVIGSISMIISVILKCIPVEFNKTNTKPHGYELIPEGPEIL.

At 1 to 155 (MEGGRSWSIE…RSFWMFVWDA (155 aa)) the chain is on the cytoplasmic side. The next 2 helical transmembrane spans lie at 156–176 (LHDL…VVGL) and 181–201 (WPMG…VVLV). At 202 to 241 (TATSDYQQARKFMELDREKQKIYIRVTRDKKTKEVLVHDL) the chain is on the cytoplasmic side. Helical transmembrane passes span 242–262 (VVGD…GLFI) and 338–358 (VATI…LVLL). The Cytoplasmic segment spans residues 359–384 (ARFLADKGMHVGLLNWSANDALTIVN). The helical transmembrane segment at 385–405 (YFAIAVTIIVVAVPEGLPLAV) threads the bilayer. Asp441 functions as the 4-aspartylphosphate intermediate in the catalytic mechanism. Residues Asp740 and Asp744 each coordinate Mg(2+). A helical membrane pass occupies residues 807-827 (IVALIVNFVSACIIGSAPLTA). The Cytoplasmic segment spans residues 828–829 (VQ). The next 2 helical transmembrane spans lie at 830–850 (LLWV…TEPP) and 879–899 (GLYQ…LLSI). At 900 to 942 (EGPQSDKTINTLIFNSFVFCQVFNEINCREMEKINVLQGIFRN) the chain is on the cytoplasmic side. Helical transmembrane passes span 943 to 963 (WIFV…VEFL) and 974 to 994 (GELW…SVIL). Topologically, residues 995-1021 (KCIPVEFNKTNTKPHGYELIPEGPEIL) are cytoplasmic.

This sequence belongs to the cation transport ATPase (P-type) (TC 3.A.3) family. Type IIB subfamily.

It localises to the membrane. The enzyme catalyses Ca(2+)(in) + ATP + H2O = Ca(2+)(out) + ADP + phosphate + H(+). Its activity is regulated as follows. Activated by calmodulin. Functionally, this magnesium-dependent enzyme catalyzes the hydrolysis of ATP coupled with the translocation of calcium from the cytosol out of the cell, into the endoplasmic reticulum, or into organelles. The chain is Probable calcium-transporting ATPase 6, plasma membrane-type from Oryza sativa subsp. japonica (Rice).